A 357-amino-acid polypeptide reads, in one-letter code: Protein NDRG2 (357 aa).

Residues 1 to 28 are disordered; sequence MAELQEVQITEEKPLLPGQTPEAAKTHS. The residue at position 2 (alanine 2) is an N-acetylalanine. Position 20 is a phosphothreonine (threonine 20). Residues serine 312 and serine 314 each carry the phosphoserine modification. Threonine 316 carries the post-translational modification Phosphothreonine. Serine 318 bears the Phosphoserine mark. The residue at position 320 (threonine 320) is a Phosphothreonine. The interval 320 to 357 is disordered; the sequence is TSAASVDGNRSRSRTLSQSSESGTLSSGPPGHTMEVSC. 3 positions are modified to phosphoserine: serine 321, serine 324, and serine 330. A compositionally biased stretch (low complexity) spans 333–347; the sequence is RTLSQSSESGTLSSG. Threonine 334 carries the post-translational modification Phosphothreonine. 4 positions are modified to phosphoserine: serine 336, serine 338, serine 339, and serine 341. Phosphothreonine is present on threonine 343. Serine 356 is subject to Phosphoserine.

The protein belongs to the NDRG family. In terms of assembly, interacts with CTNNB1.

It localises to the cytoplasm. The protein localises to the perinuclear region. Its subcellular location is the cell projection. The protein resides in the growth cone. Contributes to the regulation of the Wnt signaling pathway. Down-regulates CTNNB1-mediated transcriptional activation of target genes, such as CCND1, and may thereby act as tumor suppressor. May be involved in dendritic cell and neuron differentiation. The sequence is that of Protein NDRG2 (NDRG2) from Pan troglodytes (Chimpanzee).